The sequence spans 132 residues: MAITKSKQQKTRKKVKRVVSDGIVHIHASFNNTIVTFTDRQGNALCWATSGGSGFRGSRKSTPYAAQVATERAAAVAKEYGMKSVAVFVHGPGPGRESTIRELITQDFKIVEITDVTGIPHNGCKPPIKRRV.

The protein belongs to the universal ribosomal protein uS11 family. In terms of assembly, part of the 30S ribosomal subunit. Interacts with proteins S7 and S18. Binds to IF-3.

Located on the platform of the 30S subunit, it bridges several disparate RNA helices of the 16S rRNA. Forms part of the Shine-Dalgarno cleft in the 70S ribosome. The chain is Small ribosomal subunit protein uS11 from Legionella pneumophila (strain Corby).